Here is a 158-residue protein sequence, read N- to C-terminus: Small ribosomal subunit protein uS7 (158 aa).

The protein belongs to the universal ribosomal protein uS7 family. As to quaternary structure, part of the 30S ribosomal subunit. Contacts proteins S9 and S11.

One of the primary rRNA binding proteins, it binds directly to 16S rRNA where it nucleates assembly of the head domain of the 30S subunit. Is located at the subunit interface close to the decoding center, probably blocks exit of the E-site tRNA. The protein is Small ribosomal subunit protein uS7 of Phocaeicola vulgatus (strain ATCC 8482 / DSM 1447 / JCM 5826 / CCUG 4940 / NBRC 14291 / NCTC 11154) (Bacteroides vulgatus).